The chain runs to 200 residues: Recombination protein RecR (200 aa).

A C4-type zinc finger spans residues 58–73; sequence CQVCGNMDTENICGIC. The region spanning 81-176 is the Toprim domain; that stretch reads SVIAIVETVA…KISRLASGIP (96 aa).

The protein belongs to the RecR family.

Its function is as follows. May play a role in DNA repair. It seems to be involved in an RecBC-independent recombinational process of DNA repair. It may act with RecF and RecO. The chain is Recombination protein RecR from Rickettsia bellii (strain OSU 85-389).